Consider the following 462-residue polypeptide: S-alkyl-thiohydroximate lyase SUR1 (462 aa).

Belongs to the class-I pyridoxal-phosphate-dependent aminotransferase family. The cofactor is pyridoxal 5'-phosphate.

Functionally, C-S lyase involved in glucosinolate biosynthesis. Converts S-(alkylacetohydroximoyl)-L-cysteine to thiohydroximate. Functions in auxin homeostasis. Probably required for glucosinolate activation in response to pathogens. The polypeptide is S-alkyl-thiohydroximate lyase SUR1 (SUR1) (Arabidopsis thaliana (Mouse-ear cress)).